The sequence spans 281 residues: Oxidoreductase-like protein SRL4 (281 aa).

Residues Leu-39, Thr-60, Lys-67, Lys-152, and Lys-197 each coordinate NADP(+). Lys-197 functions as the Lowers pKa of active site Tyr in the catalytic mechanism.

The protein belongs to the short-chain dehydrogenases/reductases (SDR) family.

Functionally, may be involved in the regulation of dNTP production. Induces the SOS system when expressed in E.coli, therefore, it may play a role in DNA metabolism and/or in genome stability. This chain is Oxidoreductase-like protein SRL4 (SRL4), found in Saccharomyces cerevisiae (strain ATCC 204508 / S288c) (Baker's yeast).